The following is a 386-amino-acid chain: NADH kinase pos5, mitochondrial (386 aa).

Residues 1 to 42 (MIRAANGFRISVRNTAVCLAPNFRQLKGFSIINLGSLQYFRY) constitute a mitochondrion transit peptide.

Belongs to the NAD kinase family.

The protein resides in the mitochondrion. The catalysed reaction is NADH + ATP = ADP + NADPH + H(+). In terms of biological role, phosphorylates both NADH and NAD(+), with a preference for NADH. Anti-oxidant factor and key source of the cellular reductant NADPH. The chain is NADH kinase pos5, mitochondrial (pos5) from Schizosaccharomyces pombe (strain 972 / ATCC 24843) (Fission yeast).